The sequence spans 300 residues: Ribosomal RNA small subunit methyltransferase H (300 aa).

Residues 43 to 45 (AGH), aspartate 60, aspartate 105, and glutamine 112 contribute to the S-adenosyl-L-methionine site.

It belongs to the methyltransferase superfamily. RsmH family.

The protein resides in the cytoplasm. The enzyme catalyses cytidine(1402) in 16S rRNA + S-adenosyl-L-methionine = N(4)-methylcytidine(1402) in 16S rRNA + S-adenosyl-L-homocysteine + H(+). Specifically methylates the N4 position of cytidine in position 1402 (C1402) of 16S rRNA. In Deinococcus deserti (strain DSM 17065 / CIP 109153 / LMG 22923 / VCD115), this protein is Ribosomal RNA small subunit methyltransferase H.